Consider the following 123-residue polypeptide: Putative iron-sulfur cluster insertion protein ErpA (123 aa).

Residues cysteine 51, cysteine 115, and cysteine 117 each contribute to the iron-sulfur cluster site.

It belongs to the HesB/IscA family. As to quaternary structure, homodimer. Iron-sulfur cluster is required as a cofactor.

Required for insertion of 4Fe-4S clusters. The polypeptide is Putative iron-sulfur cluster insertion protein ErpA (Burkholderia lata (strain ATCC 17760 / DSM 23089 / LMG 22485 / NCIMB 9086 / R18194 / 383)).